The primary structure comprises 278 residues: MKETFIHPTALVEQGVELGQGVSVGPFCHIQSGAVIGDNSELMSHVVVTGATTLGTGGKVYPHAVLGCDPQNNKHKGGPTKLNIGANCLIREGVTMHKGSDSARGYTSVGDNCSFLAYAHVAHDCDIGDYVTFSNNVMIGGHTTIGHHAILGGGAAIHQFVRVGHHAFVGGMAAVVSDLIPYGMAIGVHAHLGGLNIVGMKRSGMERKEIHNLRHAVRMLFDRTKPIRDRAKDVLTAIPDSPAVIDMIDFINVDTKRAYCTPPLDAVHGGAGHDSGED.

The protein belongs to the transferase hexapeptide repeat family. LpxA subfamily. Homotrimer.

Its subcellular location is the cytoplasm. It catalyses the reaction a (3R)-hydroxyacyl-[ACP] + UDP-N-acetyl-alpha-D-glucosamine = a UDP-3-O-[(3R)-3-hydroxyacyl]-N-acetyl-alpha-D-glucosamine + holo-[ACP]. It functions in the pathway glycolipid biosynthesis; lipid IV(A) biosynthesis; lipid IV(A) from (3R)-3-hydroxytetradecanoyl-[acyl-carrier-protein] and UDP-N-acetyl-alpha-D-glucosamine: step 1/6. Its function is as follows. Involved in the biosynthesis of lipid A, a phosphorylated glycolipid that anchors the lipopolysaccharide to the outer membrane of the cell. The protein is Acyl-[acyl-carrier-protein]--UDP-N-acetylglucosamine O-acyltransferase of Brucella anthropi (strain ATCC 49188 / DSM 6882 / CCUG 24695 / JCM 21032 / LMG 3331 / NBRC 15819 / NCTC 12168 / Alc 37) (Ochrobactrum anthropi).